The chain runs to 391 residues: Paired box protein Pax-5 (391 aa).

The segment at residues 16-142 is a DNA-binding region (paired); the sequence is GHGGVNQLGG…SSINRIIRTK (127 aa). The tract at residues 19–75 is PAI subdomain; it reads GVNQLGGVFVNGRPLPDVVRQRIVELAHQGVRPCDISRQLRVSHGCVSKILGRYYET. An RED subdomain region spans residues 94–142; that stretch reads KVVEKIAEYKRQNPTMFAWEIRDRLLAERVCDNDTVPSVSSINRIIRTK. Residues 182 to 218 form a disordered region; it reads SGILGITSPSADTNKRKRDEGIQESPVPNGHSLPGRD.

Interacts with ETS1; this interaction alters PAX5 DNA-binding properties. Binds DNA as a monomer. Interacts with TBP; this interaction allows PAX5 to interact with the basal transcription machinery. Interacts with RB1. Interacts with TLE4. Interacts with DAXX. Post-translationally, O-glycosylated. Phosphorylated by SYK. This phosphorylation plays an important role in the abolition of BLIMP1 repression by PAX5 in order to trigger plasma cell differentiation. Expressed in all B-lymphoid organs, in the embryonic midbrain and in adult testis.

It is found in the nucleus. Functionally, transcription factor that plays an essential role in commitment of lymphoid progenitors to the B-lymphocyte lineage. Fulfills a dual role by repressing B-lineage inappropriate genes and simultaneously activating B-lineage-specific genes. In turn, regulates cell adhesion and migration, induces V(H)-to-D(H)J(H) recombination, facilitates pre-B-cell receptor signaling and promotes development to the mature B-cell stage. Repression of the cohesin-release factor WAPL causes global changes of the chromosomal architecture in pro-B cells to facilitate the generation of a diverse antibody repertoire. The protein is Paired box protein Pax-5 (Pax5) of Mus musculus (Mouse).